Consider the following 324-residue polypeptide: Putative F-box/kelch-repeat protein At5g28160 (324 aa).

Positions 7–54 (RPSFLSLPDEIILSCLARISRSYYPKLSLVCKTFRTLLISNELIVARL) constitute an F-box domain. The Kelch repeat unit spans residues 170 to 216 (KIYVMGGCMADESVNWGEVFDIKTQTWEALPDPGPEFRFSSIRKIDV).

The polypeptide is Putative F-box/kelch-repeat protein At5g28160 (Arabidopsis thaliana (Mouse-ear cress)).